The primary structure comprises 81 residues: Short neurotoxin 1 (81 aa).

An N-terminal signal peptide occupies residues 1 to 21 (MKTLLLTLVVVTIVCLDLGYT). 4 disulfides stabilise this stretch: Cys24–Cys43, Cys38–Cys60, Cys62–Cys73, and Cys74–Cys79.

Belongs to the three-finger toxin family. Short-chain subfamily. Type I alpha-neurotoxin sub-subfamily. Expressed by the venom gland.

The protein localises to the secreted. Functionally, binds to muscle nicotinic acetylcholine receptor (nAChR) and inhibit acetylcholine from binding to the receptor, thereby impairing neuromuscular transmission. This is Short neurotoxin 1 from Tropidechis carinatus (Australian rough-scaled snake).